We begin with the raw amino-acid sequence, 414 residues long: Translation initiation factor 2 subunit gamma (414 aa).

A tr-type G domain is found at 7–204 (QPEVNIGLVG…ALQTEIATPD (198 aa)). Residues 16 to 23 (GHVDHGKT) form a G1 region. Mg(2+) contacts are provided by aspartate 19, threonine 23, glycine 44, and serine 46. 19–24 (DHGKTT) serves as a coordination point for GTP. The segment at 44 to 48 (GISIR) is G2. A G3 region spans residues 91-94 (DAPG). Residues 147-150 (NKVD) and 182-184 (SAE) contribute to the GTP site. A G4 region spans residues 147 to 150 (NKVD). Residues 182–184 (SAE) form a G5 region.

Belongs to the TRAFAC class translation factor GTPase superfamily. Classic translation factor GTPase family. EIF2G subfamily. As to quaternary structure, heterotrimer composed of an alpha, a beta and a gamma chain. Requires Mg(2+) as cofactor.

The catalysed reaction is GTP + H2O = GDP + phosphate + H(+). Its function is as follows. eIF-2 functions in the early steps of protein synthesis by forming a ternary complex with GTP and initiator tRNA. In Halobacterium salinarum (strain ATCC 29341 / DSM 671 / R1), this protein is Translation initiation factor 2 subunit gamma.